A 387-amino-acid polypeptide reads, in one-letter code: Ferrochelatase (387 aa).

The ferrochelatase stretch occupies residues 1–318 (MGRVGVLLLN…VFIDALAQMV (318 aa)). The Fe cation site is built by His196 and Glu277. The hlip domain stretch occupies residues 319–387 (MDSLNDPPCT…QGPLHFVGLL (69 aa)).

It in the N-terminal section; belongs to the ferrochelatase family. The protein in the C-terminal section; belongs to the Hlip family.

It localises to the cytoplasm. The enzyme catalyses heme b + 2 H(+) = protoporphyrin IX + Fe(2+). The protein operates within porphyrin-containing compound metabolism; protoheme biosynthesis; protoheme from protoporphyrin-IX: step 1/1. Its function is as follows. Catalyzes the ferrous insertion into protoporphyrin IX. Functionally, the Hlip proteins might regulate tetrapyrrole biosynthesis, maybe at the level of aminolevulinic acid synthesis. Deletion of 4 to 5 members of the Hlip family (always including this member) suggests the proteins are involved in regulation of chlorophyll biosynthesis, in stabilization of chlorophyll-binding proteins and/or in reuse of chlorophylls, and may regulate tetrapyrrole biosynthesis. The Hlip proteins probably stabilize PSII assembly intermediates. The chain is Ferrochelatase from Synechocystis sp. (strain ATCC 27184 / PCC 6803 / Kazusa).